The following is a 481-amino-acid chain: Glutamyl-tRNA(Gln) amidotransferase subunit A (481 aa).

Residues Lys-78 and Ser-153 each act as charge relay system in the active site. Residue Ser-177 is the Acyl-ester intermediate of the active site.

Belongs to the amidase family. GatA subfamily. As to quaternary structure, heterotrimer of A, B and C subunits.

The enzyme catalyses L-glutamyl-tRNA(Gln) + L-glutamine + ATP + H2O = L-glutaminyl-tRNA(Gln) + L-glutamate + ADP + phosphate + H(+). Functionally, allows the formation of correctly charged Gln-tRNA(Gln) through the transamidation of misacylated Glu-tRNA(Gln) in organisms which lack glutaminyl-tRNA synthetase. The reaction takes place in the presence of glutamine and ATP through an activated gamma-phospho-Glu-tRNA(Gln). This chain is Glutamyl-tRNA(Gln) amidotransferase subunit A, found in Borreliella afzelii (strain PKo) (Borrelia afzelii).